Here is a 143-residue protein sequence, read N- to C-terminus: MSAVPSVQTFGKKKSATAVAHVKAGKGLIKVNGAPITLVQPEILRFKVYEPLLLVGLDKFTNIDIRVRVTGGGHVSQVYAIRQAIAKGLIAYHQKFVDEQSKNELKRAFTLYDRTLLIADSRMPEPKKFGGKGARSRYQKSYR.

Ser2 bears the N-acetylserine mark. Residues 123–143 (MPEPKKFGGKGARSRYQKSYR) form a disordered region. Basic residues predominate over residues 134–143 (ARSRYQKSYR).

It belongs to the universal ribosomal protein uS9 family.

This Maudiozyma exigua (Yeast) protein is Small ribosomal subunit protein uS9 (RPS16).